Consider the following 425-residue polypeptide: MNTDNASLYVKWLKQEVAPALGCTEPVAISFAAAYAAQYLDQPCTKISGFISANLYKNAMGVTIPGTTVCGVPLAAAIGAFGGDPQKGLKTLEDITPQHVEMAQKLIANNAVDIAVEETPDFIHLDLTLSAGDNCCRVVVKGTHTNVVELYINGQPQPLSEKQNTRTQRETLPTFSLQQAYDFINRVDFNDIRFILDAARLNSALAAEGKTKKYGLNINGTFSDAVKNGLMSNDLLSKVIINTVAASDARMGGAPVVAMSNFGSGNQGITATMPVVVVAEHLGVDEETLARALSLSHLTAISIHSRYTRLSALCAASTAAMGAAAGMAWLFTRDINTINTAIINMISDITGMICDGASNSCAMKVSSVVSSAFKAVLMAMQNSCAGANDGIVCADVEQTINNLCRLVIKPMTLTDKEIISIMVAK.

The protein belongs to the UPF0597 family.

The protein is UPF0597 protein KPN78578_43500 of Klebsiella pneumoniae subsp. pneumoniae (strain ATCC 700721 / MGH 78578).